Here is a 2159-residue protein sequence, read N- to C-terminus: MPKRLLQYALSRLEILDTDALDLENLDIAWGKNSTFEFKDVGLRLKKLETLLQLPSTIALSKAKVLLLRLTIPVDVYSSPILVEVDGVDVQLRVKEEKGANSSRTNHDRLRKKSTSRSPGPDPALPTAEDLAASFLQTEPREEKAELEAAILGETQDISESITSSEDGDLEVPVGTGTALSLPAFMARFLQGIVDRLQVRVHGITFNVDVDIPAEGPTPNRTTDPVTVQLKIDDVDIEGVTHDIESAQTRGGKDITSLFKEGKKLICLSNIRGALITEANLFQTLSRSSSILSPAVPHSDISESRRTTEMRRSSEETQAMSVGSVRAFDGVASPSPRPSPASSLRASETSLPEIRRPSTPPRPLKISPSLKASIAASDGGRFDDASEDGHSNRSVSVHEDIDSSEMGDSILHNSAYLDQITESQLLDDHEGDDMRSSPSQYEQERHSAPSENSRTSTPRASTHISPSSSRTLGFNQFPSINRAHNMLQSTMLPPRPHTRFSLERVSHSQPTLPSSTAPLDRSYPVQQPESPLEVDAMSEADSSVSSTLNEEAGDDLAQSQLFSHEDAESMYMSAVSYTSAAPIPGGWADSGTESEDAKSPPATPRGPDAGREKLDNLENARHAVPLDGASDTTPLEQSTILPSGSLHKSARSISSMHPETPRRSPPLYQASSDISVESTASADDYSRMTKQIFSLDQIAIYIPAMNNPSSDPVDAVAESALFGSTFDGHSDSSRSRTMDLPGAFSTHLPREQPSRPSPRPALRTPVQPAKKIEEEKLIEVDVGNLLARFDVSVGRLIYKLVCQIQESMKQEPQAVASSKPTSSSTEPHLKISAKEISLRFLEQLQGTLGSRAAESQAKTLDSDVLLRTTLKGLDVSRKPSDSITKTSITLQKFLFGYAQENIISFNANLQMRASVRDLAASAGIDVSVDMYQSSDGTRFEVQTLPLHVAVDLQRLDETFSWFGGLSSVLNLGSSMASNATVTSNPVPKPKSRGVRFNTPIGPDDKTAAAQNKADVRIGGFILDLVGTECSVGVETSAVKLVSREEGIGVAINKIRLSGPHLKHSNEDPAILVDVSSTRVELLNAPKDNDIDRLLALIAPSKSKYDQDDDILLDTLLRQRQQGSVLRLTMDDLQVKMGNLQELSYLPDLGEEVARLSTVTKYLPDDDRPGLLSLVSVKKLGVNVDVNNTLGSLQLKATDLEVAQIPIPSLVAFSVATVSAYRNYSEELIGAGTDQTFMEPSLRTPTIMARLIGDEMEPIVRIKLWNLRIEYRVPTLMVLLGLADNATENDMSASIMASVATLRDLAQPRTSKGKGKSVEKASASSNSAAKPMTIDVVLTDCIVGLNPLGLPSKILVVLTEAHVAAVLPKDQNASATAELSKASLLVIDNVAHLATNVPSNRKRNSFDGGSNQVADLTTMGYVSVSYISSAKATVLLSVDDDGQNCLDVELRDDLFVLESCADSTQTLIGVLGKLAPPAPPPSKESKYRTKVIPVKDLLASLSGDAFGTAEGNYDFDNDFGDFGDVAEEHEGDLGFDSDYYKDETEEGYRQAVLEDIGEPLASLNLTTRDTRDGVLLDSFVEDSEIGNEALSFHEDHFGTGSVLEGSAHRWNSAKNTYDTSNESKVKKSPLKVCVRDVHIIWNLFDGYDWQATRDAISKAVQDVESKAIEKRARNERRPAFEQDIDDDEDTEIGDFLFNSIWVGIPNNRDPRELAAAINQELNDNATETESIATTNYTITPSRQGTGRKPKKLRLNRSKHHKITFELRGVCVDLVAFPPFSGETQSSIDVRVLDLEVFDHVPTSTWRKFATYMQDAGEREKGSNMVHIEILNVKPVSYLAASEIVLKVTILPLRLHVDQDALDFITRFFEFKEESDVIPGAPSEEPFLQRVEVNSVQVKLDFKPKRVDYAGLRSGHTTEFMNFLILDEADMTLRHTIIYGISGFEKMGKCLNDIWMPDIQRNQLPGILAGLAPVRSIVNVGGGFKDLVVIPMHEYKKDGRIVRSISKGAAAFAKTTGTELVKLGAKVAIGVQTVLQGAEDFLGPQDASIPHGNSSEDEEERKQISLYANQPVGVFQGLKGGYAGLQRDLVMARDAIIAVPGEVMEGGSAKGVLRAVRKHAPTVILRPAIGVAKGAGQVLMGATNSLDKRNLERADAKYKKH.

8 disordered regions span residues 98–126 (KGANSSRTNHDRLRKKSTSRSPGPDPALP), 292–403 (LSPA…DIDS), 428–475 (DHEG…LGFN), 490–552 (TMLP…NEEA), 585–612 (GGWADSGTESEDAKSPPATPRGPDAGRE), 624–682 (VPLD…TASA), 726–766 (FDGH…RTPV), and 980–1001 (TVTSNPVPKPKSRGVRFNTPIG). 2 stretches are compositionally biased toward basic and acidic residues: residues 300–315 (DISESRRTTEMRRSSE) and 380–401 (GRFDDASEDGHSNRSVSVHEDI). Composition is skewed to polar residues over residues 449-475 (PSENSRTSTPRASTHISPSSSRTLGFN), 507-517 (HSQPTLPSSTA), and 540-549 (ADSSVSSTLN). Polar residues-rich tracts occupy residues 630–642 (SDTTPLEQSTILP) and 669–681 (QASSDISVESTAS). A compositionally biased stretch (basic and acidic residues) spans 728-737 (GHSDSSRSRT).

This sequence belongs to the ATG2 family.

The protein resides in the preautophagosomal structure membrane. It localises to the endoplasmic reticulum membrane. The enzyme catalyses a 1,2-diacyl-sn-glycero-3-phosphocholine(in) = a 1,2-diacyl-sn-glycero-3-phosphocholine(out). It catalyses the reaction a 1,2-diacyl-sn-glycero-3-phospho-L-serine(in) = a 1,2-diacyl-sn-glycero-3-phospho-L-serine(out). It carries out the reaction a 1,2-diacyl-sn-glycero-3-phosphoethanolamine(in) = a 1,2-diacyl-sn-glycero-3-phosphoethanolamine(out). Functionally, lipid transfer protein required for autophagosome completion and peroxisome degradation. Tethers the edge of the isolation membrane (IM) to the endoplasmic reticulum (ER) and mediates direct lipid transfer from ER to IM for IM expansion. Atg2 binds to the ER exit site (ERES), which is the membrane source for autophagosome formation, using basic residues in its N-terminal region (NR) and to the expanding edge of the IM through its C-terminal region. The latter binding is assisted by an atg18-PtdIns3P interaction. Atg2 then extracts phospholipids from the membrane source using its NR and transfers them to atg9 to the IM through its predicted beta-sheet-rich structure for membrane expansion. This is Autophagy-related protein 2 (atg2) from Sclerotinia sclerotiorum (strain ATCC 18683 / 1980 / Ss-1) (White mold).